Here is a 249-residue protein sequence, read N- to C-terminus: Probable calcium-binding protein CML12 (249 aa).

A compositionally biased stretch (basic and acidic residues) spans 1-24 (MQSQRERPREDRVHEETRGADHAH). The tract at residues 1–80 (MQSQRERPRE…RKGKAPATAE (80 aa)) is disordered. The span at 30–56 (AAAAASATATETATRTMSLHAGGVVVV) shows a compositional bias: low complexity. Basic and acidic residues predominate over residues 57-70 (DGKEKGKKEEGEGK). EF-hand domains follow at residues 91–126 (EQLR…LGLR), 128–163 (AAGD…LILG), 171–206 (VDQA…MGHP), and 207–242 (ICYA…SALD). 18 residues coordinate Ca(2+): Asp-104, Asp-106, Asp-108, Ser-110, Glu-115, Asp-141, Asp-143, Asn-145, Thr-147, Glu-152, Asp-184, Asp-186, Asn-188, Glu-195, Asp-220, Asp-222, Asp-224, and Glu-231.

Potential calcium sensor. In Oryza sativa subsp. japonica (Rice), this protein is Probable calcium-binding protein CML12 (CML12).